The primary structure comprises 346 residues: GPALPP motifs-containing protein 1 (346 aa).

2 disordered regions span residues 1–283 and 289–308; these read MARD…ESLM and KLKS…IPFD. Alanine 2 carries the post-translational modification N-acetylalanine. The short motif at 7-12 is the GPALPP motif 1 element; that stretch reads GPALPP. Serine 28 bears the Phosphoserine mark. The short motif at 32–37 is the GPALPP motif 2 element; it reads GPALPP. The segment covering 60 to 69 has biased composition (acidic residues); it reads GNQESEEEDT. The GPALPP motif 3 signature appears at 91–96; that stretch reads GPALPP. Position 104 is a phosphoserine (serine 104). Positions 106–115 are enriched in pro residues; it reads PRPIIGPALP. Positions 111–116 match the GPALPP motif 4 motif; the sequence is GPALPP. Residues 123–132 are compositionally biased toward basic and acidic residues; the sequence is QKNDKGREDP. Residues serine 136, serine 141, and serine 146 each carry the phosphoserine modification. The segment covering 142 to 152 has biased composition (acidic residues); that stretch reads EEAESGEDEDI. Basic and acidic residues-rich tracts occupy residues 169–193 and 233–267; these read EFEK…KPIT and PADR…KRLA. Lysine 277 participates in a covalent cross-link: Glycyl lysine isopeptide (Lys-Gly) (interchain with G-Cter in SUMO2). Residues 293–308 are compositionally biased toward basic and acidic residues; sequence KAAEDKNKHQERIPFD. Lysine 314 is covalently cross-linked (Glycyl lysine isopeptide (Lys-Gly) (interchain with G-Cter in SUMO2)).

This is GPALPP motifs-containing protein 1 (Gpalpp1) from Mus musculus (Mouse).